The primary structure comprises 152 residues: Large ribosomal subunit protein uL15 (152 aa).

The segment at 1-79 (MRLNELSPPP…GRHTPAHPKV (79 aa)) is disordered. Gly residues predominate over residues 22–35 (GEGSGYGKTSGRGQ).

It belongs to the universal ribosomal protein uL15 family. In terms of assembly, part of the 50S ribosomal subunit.

Binds to the 23S rRNA. The polypeptide is Large ribosomal subunit protein uL15 (Rubrobacter xylanophilus (strain DSM 9941 / JCM 11954 / NBRC 16129 / PRD-1)).